Consider the following 324-residue polypeptide: Geranylgeranyl pyrophosphate synthase dpmpD (324 aa).

Isopentenyl diphosphate contacts are provided by lysine 50, arginine 53, and histidine 82. Positions 89 and 93 each coordinate Mg(2+). Arginine 98 provides a ligand contact to dimethylallyl diphosphate. Arginine 99 provides a ligand contact to isopentenyl diphosphate. Dimethylallyl diphosphate-binding residues include lysine 176, threonine 177, and glutamine 210. A Mg(2+)-binding site is contributed by aspartate 213. Dimethylallyl diphosphate is bound by residues asparagine 217, lysine 227, and lysine 237.

Belongs to the FPP/GGPP synthase family. It depends on Mg(2+) as a cofactor.

The catalysed reaction is isopentenyl diphosphate + dimethylallyl diphosphate = (2E)-geranyl diphosphate + diphosphate. The enzyme catalyses isopentenyl diphosphate + (2E)-geranyl diphosphate = (2E,6E)-farnesyl diphosphate + diphosphate. It catalyses the reaction isopentenyl diphosphate + (2E,6E)-farnesyl diphosphate = (2E,6E,10E)-geranylgeranyl diphosphate + diphosphate. It participates in secondary metabolite biosynthesis; terpenoid biosynthesis. In terms of biological role, geranylgeranyl pyrophosphate synthase; part of the gene cluster that mediates the biosynthesis of diterpenoid pyrones. The first step of the pathway is the synthesis of the alpha-pyrone moiety by the polyketide synthase dpmpA via condensation of one acetyl-CoA starter unit with 3 malonyl-CoA units and 2 methylations. The alpha-pyrone is then combined with geranylgeranyl pyrophosphate (GGPP) formed by the GGPP synthase dpmpD through the action of the prenyltransferase dpmpC to yield a linear alpha-pyrone diterpenoid. Subsequent steps in the diterpenoid pyrone biosynthetic pathway involve the decalin core formation, which is initiated by the epoxidation of the C10-C11 olefin by the FAD-dependent oxidoreductase dpmpE, and is followed by a cyclization cascade catalyzed by the terpene cyclase dpmpB. The short chain dehydrogenase/reductase dpmpG then oxidizes the 8S hydroxy group to a ketone and the short chain dehydrogenase/reductase dpmpH reduces the ketone to the 8R hydroxy group to yield higginsianin B. Higginsianin B is further methylated by the methyltransferase dpmpI to produce the intermediate named FDDP B. The cytochrome P450 monooxygenase dpmpJ then oxidizes the C-26 methyl to primary alcohol, producing the final diterpenoid pyrone with a C-26 primary alcohol on the gamma-pyrone moiety named FDDP C. The polypeptide is Geranylgeranyl pyrophosphate synthase dpmpD (Macrophomina phaseolina (strain MS6) (Charcoal rot fungus)).